The chain runs to 218 residues: ATP phosphoribosyltransferase (218 aa).

It belongs to the ATP phosphoribosyltransferase family. Short subfamily. As to quaternary structure, heteromultimer composed of HisG and HisZ subunits.

The protein resides in the cytoplasm. The enzyme catalyses 1-(5-phospho-beta-D-ribosyl)-ATP + diphosphate = 5-phospho-alpha-D-ribose 1-diphosphate + ATP. It participates in amino-acid biosynthesis; L-histidine biosynthesis; L-histidine from 5-phospho-alpha-D-ribose 1-diphosphate: step 1/9. Its function is as follows. Catalyzes the condensation of ATP and 5-phosphoribose 1-diphosphate to form N'-(5'-phosphoribosyl)-ATP (PR-ATP). Has a crucial role in the pathway because the rate of histidine biosynthesis seems to be controlled primarily by regulation of HisG enzymatic activity. The chain is ATP phosphoribosyltransferase from Lactiplantibacillus plantarum (strain ATCC BAA-793 / NCIMB 8826 / WCFS1) (Lactobacillus plantarum).